Here is a 197-residue protein sequence, read N- to C-terminus: Probable GTP-binding protein EngB (197 aa).

One can recognise an EngB-type G domain in the interval 22 to 195 (NLPEIAFVGR…VDYLFDDLVE (174 aa)). Residues 30–37 (GRSNVGKS), 57–61 (GKTRL), 75–78 (DLPG), 142–145 (TKSD), and 174–176 (FSS) each bind GTP. Mg(2+) is bound by residues Ser37 and Thr59.

Belongs to the TRAFAC class TrmE-Era-EngA-EngB-Septin-like GTPase superfamily. EngB GTPase family. Mg(2+) is required as a cofactor.

In terms of biological role, necessary for normal cell division and for the maintenance of normal septation. The chain is Probable GTP-binding protein EngB from Clostridium perfringens (strain SM101 / Type A).